The following is a 198-amino-acid chain: Nucleoplasmin (198 aa).

The tract at residues 35–38 is acidic tract A1; sequence SDED. A compositionally biased stretch (acidic residues) spans 125 to 145; the sequence is SWAEEEGEEEVEEEEEEEDPE. Residues 125–198 are disordered; it reads SWAEEEGEEE…GRGRKPAAKK (74 aa). The interval 128 to 145 is acidic tract A2; it reads EEEGEEEVEEEEEEEDPE. The span at 150-167 shows a compositional bias: basic residues; the sequence is AVKRPAASKKGSQAKKKK. The Bipartite nuclear localization signal signature appears at 152–167; that stretch reads KRPAASKKGSQAKKKK. The segment at 172–174 is acidic tract A3; sequence EEE. Residues 183 to 198 show a composition bias toward basic residues; it reads KKGKGAGRGRKPAAKK.

It belongs to the nucleoplasmin family. Homopentamer. In terms of tissue distribution, expressed in oocytes.

The protein resides in the nucleus. In terms of biological role, acts as a chaperone for histones, such as histone H2A-H2B, and thus regulates the assembly of nucleosome cores. Involved in chromatin remodeling, especially during fertilization and early embryonic development. May be involved in sperm chromatin decondensation during fertilization. This is Nucleoplasmin from Rhinella marina (Cane toad).